A 921-amino-acid polypeptide reads, in one-letter code: Glutamate receptor 3.7 (921 aa).

A signal peptide spans 1 to 25 (MGLGIDPSVAITALIVVILVVPMDC). Residues 26 to 580 (QRPQLVNIGA…WIFLRPFTSR (555 aa)) lie on the Extracellular side of the membrane. 7 N-linked (GlcNAc...) asparagine glycosylation sites follow: Asn-214, Asn-300, Asn-330, Asn-369, Asn-396, Asn-478, and Asn-568. The chain crosses the membrane as a helical span at residues 581-601 (LWCVVLVSFLVIAVVIWILEH). At 602–608 (RINEDFR) the chain is on the cytoplasmic side. The helical transmembrane segment at 609–629 (GPPRRQLSTMLLFSFSTLFKR) threads the bilayer. Residues 630–640 (NQEDTISNLAR) lie on the Cytoplasmic side of the membrane. The chain crosses the membrane as a helical span at residues 641–661 (LVMIVWLFLLMVLTASYTANL). At 662 to 822 (TSILTVQQLP…PEPNQLHLKS (161 aa)) the chain is on the extracellular side. A helical membrane pass occupies residues 823–843 (FKGLYLVCIAITVSAFLVFVL). Over 844–921 (RMIRQFVRYR…VQADTEVPRN (78 aa)) the chain is Cytoplasmic. A disordered region spans residues 896-921 (FRRSDDSNNNPSHVGEVQADTEVPRN).

This sequence belongs to the glutamate-gated ion channel (TC 1.A.10.1) family. In terms of assembly, may form heteromers. As to expression, expressed predominantly in leaves and siliques. Also detected in roots.

The protein localises to the membrane. Glutamate-gated receptor that probably acts as a non-selective cation channel. May be involved in light-signal transduction and calcium homeostasis via the regulation of calcium influx into cells. The protein is Glutamate receptor 3.7 (GLR3.7) of Arabidopsis thaliana (Mouse-ear cress).